Consider the following 132-residue polypeptide: Small heat shock protein hspL (132 aa).

One can recognise a sHSP domain in the interval 15-131; it reads TFTNFVSAPV…VKMSNNNKVE (117 aa).

The protein belongs to the small heat shock protein (HSP20) family.

In Dictyostelium discoideum (Social amoeba), this protein is Small heat shock protein hspL (hspL).